A 96-amino-acid chain; its full sequence is Large ribosomal subunit protein bL28 (96 aa).

Belongs to the bacterial ribosomal protein bL28 family.

The polypeptide is Large ribosomal subunit protein bL28 (Methylocella silvestris (strain DSM 15510 / CIP 108128 / LMG 27833 / NCIMB 13906 / BL2)).